A 396-amino-acid chain; its full sequence is Elongation factor Tu (396 aa).

A tr-type G domain is found at 11–205 (KPHVNIGTIG…VIDEYIPTPV (195 aa)). Residues 20-27 (GHVDHGKT) form a G1 region. 20-27 (GHVDHGKT) contacts GTP. A Mg(2+)-binding site is contributed by Thr27. Positions 61–65 (GITIN) are G2. A G3 region spans residues 82–85 (DAPG). GTP contacts are provided by residues 82 to 86 (DAPGH) and 137 to 140 (NKTD). The segment at 137–140 (NKTD) is G4. The interval 175 to 177 (SAL) is G5.

The protein belongs to the TRAFAC class translation factor GTPase superfamily. Classic translation factor GTPase family. EF-Tu/EF-1A subfamily. Monomer.

It is found in the cytoplasm. It carries out the reaction GTP + H2O = GDP + phosphate + H(+). Functionally, GTP hydrolase that promotes the GTP-dependent binding of aminoacyl-tRNA to the A-site of ribosomes during protein biosynthesis. This chain is Elongation factor Tu, found in Oenococcus oeni (strain ATCC BAA-331 / PSU-1).